A 476-amino-acid chain; its full sequence is Sulfate adenylyltransferase subunit 1 (476 aa).

Residues 24–239 (KSMLRFLTCG…VLENVDIDQK (216 aa)) enclose the tr-type G domain. Residues 33–40 (GSVDDGKS) are G1. 33 to 40 (GSVDDGKS) is a binding site for GTP. Positions 91–95 (GITID) are G2. The G3 stretch occupies residues 112-115 (DTPG). GTP is bound by residues 112–116 (DTPGH) and 167–170 (NKMD). A G4 region spans residues 167–170 (NKMD). Positions 205 to 207 (SAL) are G5.

Belongs to the TRAFAC class translation factor GTPase superfamily. Classic translation factor GTPase family. CysN/NodQ subfamily. As to quaternary structure, heterodimer composed of CysD, the smaller subunit, and CysN.

It catalyses the reaction sulfate + ATP + H(+) = adenosine 5'-phosphosulfate + diphosphate. It participates in sulfur metabolism; hydrogen sulfide biosynthesis; sulfite from sulfate: step 1/3. With CysD forms the ATP sulfurylase (ATPS) that catalyzes the adenylation of sulfate producing adenosine 5'-phosphosulfate (APS) and diphosphate, the first enzymatic step in sulfur assimilation pathway. APS synthesis involves the formation of a high-energy phosphoric-sulfuric acid anhydride bond driven by GTP hydrolysis by CysN coupled to ATP hydrolysis by CysD. This chain is Sulfate adenylyltransferase subunit 1, found in Vibrio atlanticus (strain LGP32) (Vibrio splendidus (strain Mel32)).